The primary structure comprises 467 residues: GTPase Der (467 aa).

EngA-type G domains follow at residues 25 to 188 (PVVA…PEAP) and 199 to 372 (RRVA…ASWE). GTP is bound by residues 31–38 (GRPNVGKS), 78–82 (DTGGW), 140–143 (NKAD), 205–212 (GRPNVGKS), 252–256 (DTAGL), and 317–320 (NKWD). A KH-like domain is found at 373–455 (TRVPTAQLNA…PIEIAVRPRK (83 aa)).

The protein belongs to the TRAFAC class TrmE-Era-EngA-EngB-Septin-like GTPase superfamily. EngA (Der) GTPase family. Associates with the 50S ribosomal subunit.

In terms of biological role, GTPase that plays an essential role in the late steps of ribosome biogenesis. This is GTPase Der from Salinispora arenicola (strain CNS-205).